We begin with the raw amino-acid sequence, 177 residues long: Large ribosomal subunit protein uL5 (177 aa).

This sequence belongs to the universal ribosomal protein uL5 family. In terms of assembly, part of the 50S ribosomal subunit. Interacts with protein L18 and the 5S rRNA, and probably with tRNAs. Forms a bridge to the 30S subunit in the 70S ribosome.

This is 1 of 5 proteins that mediates the attachment of the 5S rRNA onto the large ribosomal subunit, stabilizing the orientation of adjacent RNA domains. Forms part of the central protuberance. Modeling places the A and P site tRNAs in close proximity to this protein; the 5S rRNA and some of its associated proteins might help stabilize positioning of ribosome-bound tRNAs. In the 70S ribosome it is thought to contact protein S13 of the 30S subunit (bridge B1b), connecting the 2 subunits; this bridge is implicated in subunit movement. The polypeptide is Large ribosomal subunit protein uL5 (rpl5) (Haloarcula marismortui (strain ATCC 43049 / DSM 3752 / JCM 8966 / VKM B-1809) (Halobacterium marismortui)).